The primary structure comprises 101 residues: Small ribosomal subunit protein uS14 (101 aa).

Belongs to the universal ribosomal protein uS14 family. Part of the 30S ribosomal subunit. Contacts proteins S3 and S10.

Functionally, binds 16S rRNA, required for the assembly of 30S particles and may also be responsible for determining the conformation of the 16S rRNA at the A site. The chain is Small ribosomal subunit protein uS14 from Polynucleobacter necessarius subsp. necessarius (strain STIR1).